A 134-amino-acid chain; its full sequence is Profilin-3 (134 aa).

Cysteine 13 and cysteine 118 are joined by a disulfide. Positions 84–100 (AVIRGKKGSGGITIKKT) match the Involved in PIP2 interaction motif. Threonine 114 bears the Phosphothreonine mark.

The protein belongs to the profilin family. Occurs in many kinds of cells as a complex with monomeric actin in a 1:1 ratio. In terms of processing, phosphorylated by MAP kinases.

Its subcellular location is the cytoplasm. The protein localises to the cytoskeleton. In terms of biological role, binds to actin and affects the structure of the cytoskeleton. At high concentrations, profilin prevents the polymerization of actin, whereas it enhances it at low concentrations. The chain is Profilin-3 from Olea europaea (Common olive).